A 249-amino-acid chain; its full sequence is GTP cyclohydrolase 1 type 2 homolog (249 aa).

A divalent metal cation is bound by residues His64, His65, Asp102, His217, and Glu221.

Belongs to the GTP cyclohydrolase I type 2/NIF3 family. Homohexamer.

This is GTP cyclohydrolase 1 type 2 homolog from Neisseria meningitidis serogroup A / serotype 4A (strain DSM 15465 / Z2491).